A 2156-amino-acid chain; its full sequence is Oxygen-regulated protein 1 (2156 aa).

Positions 1–19 (MSDTPSTGFSIIHPTSSEG) are enriched in polar residues. Residues 1 to 25 (MSDTPSTGFSIIHPTSSEGQVPPPR) form a disordered region. Doublecortin domains are found at residues 36–118 (KRIS…VDLD) and 154–233 (RSLV…GNYD). Disordered stretches follow at residues 353–375 (VSKT…RTES), 666–686 (SSVA…SRYQ), 1438–1458 (DMEE…MTSS), and 1590–1621 (DWSD…TQEK).

As to quaternary structure, interacts (via the doublecortin domains) with microtubules. Interacts with RP1L1. Interacts with MAK. In terms of tissue distribution, expressed in retina. Not expressed in heart, brain, placenta, lung, liver, skeletal muscle, kidney, spleen and pancreas.

The protein resides in the cytoplasm. It localises to the cytoskeleton. It is found in the cilium axoneme. Its subcellular location is the cell projection. The protein localises to the cilium. The protein resides in the photoreceptor outer segment. Functionally, microtubule-associated protein regulating the stability and length of the microtubule-based axoneme of photoreceptors. Required for the differentiation of photoreceptor cells, it plays a role in the organization of the outer segment of rod and cone photoreceptors ensuring the correct orientation and higher-order stacking of outer segment disks along the photoreceptor axoneme. This chain is Oxygen-regulated protein 1 (RP1), found in Homo sapiens (Human).